The chain runs to 197 residues: Large ribosomal subunit protein uL5 (197 aa).

This sequence belongs to the universal ribosomal protein uL5 family. Part of the 50S ribosomal subunit; contacts the 5S rRNA and probably tRNA. Forms a bridge to the 30S subunit in the 70S ribosome.

Its function is as follows. This is one of the proteins that bind and probably mediate the attachment of the 5S RNA into the large ribosomal subunit, where it forms part of the central protuberance. In the 70S ribosome it contacts protein S13 of the 30S subunit (bridge B1b), connecting the 2 subunits; this bridge is implicated in subunit movement. May contact the P site tRNA; the 5S rRNA and some of its associated proteins might help stabilize positioning of ribosome-bound tRNAs. This Caldivirga maquilingensis (strain ATCC 700844 / DSM 13496 / JCM 10307 / IC-167) protein is Large ribosomal subunit protein uL5.